A 38-amino-acid chain; its full sequence is Photosystem II reaction center protein L (38 aa).

Residues 17-37 (SLYWGLLLIFVLAILFSNYIF) form a helical membrane-spanning segment.

It belongs to the PsbL family. In terms of assembly, PSII is composed of 1 copy each of membrane proteins PsbA, PsbB, PsbC, PsbD, PsbE, PsbF, PsbH, PsbI, PsbJ, PsbK, PsbL, PsbM, PsbT, PsbX, PsbY, PsbZ, Psb30/Ycf12, at least 3 peripheral proteins of the oxygen-evolving complex and a large number of cofactors. It forms dimeric complexes.

The protein resides in the plastid. It is found in the chloroplast thylakoid membrane. Its function is as follows. One of the components of the core complex of photosystem II (PSII). PSII is a light-driven water:plastoquinone oxidoreductase that uses light energy to abstract electrons from H(2)O, generating O(2) and a proton gradient subsequently used for ATP formation. It consists of a core antenna complex that captures photons, and an electron transfer chain that converts photonic excitation into a charge separation. This subunit is found at the monomer-monomer interface and is required for correct PSII assembly and/or dimerization. The polypeptide is Photosystem II reaction center protein L (Chlorokybus atmophyticus (Soil alga)).